Here is a 469-residue protein sequence, read N- to C-terminus: Protein RUFY3 (469 aa).

Phosphothreonine is present on residues Thr5 and Thr12. Ser34 and Ser49 each carry phosphoserine. Thr51 bears the Phosphothreonine mark. Residues 95–227 (DSDYAPLQQF…IDANFCMKGE (133 aa)) enclose the RUN domain. 2 coiled-coil regions span residues 271–362 (NRHL…VEKE) and 422–463 (KSEL…AANK).

As to quaternary structure, interacts with PAK1. Interacts (via C-terminus) with Ras-related Rab-5 proteins. Interacts (via C-terminus) with Ras-related Rap-2 proteins. Interacts with PIK3CA and PIK3R1. Interacts (via N-terminus) with FSCN1; this interaction induces neuron axon development. Interacts with DBN1. Interacts (via the second coiled coil) with GTP-, but not GDP-bound ARL8A and ARL8B. Interacts with dynactin/DCTN1 and the dynein intermediate chain DYNC1I1/2. Directly interacts with DYNC1LI1. Post-translationally, isoform 1 is partially phosphorylated. Phosphorylated by PAK1. In terms of tissue distribution, expressed in brain (at protein level).

The protein localises to the cytoplasm. Its subcellular location is the endomembrane system. The protein resides in the cell projection. It is found in the invadopodium. It localises to the growth cone. The protein localises to the perikaryon. Its subcellular location is the filopodium. The protein resides in the lamellipodium. It is found in the lysosome. Functionally, ARL8 effector that promotes the coupling of endolysosomes to dynein-dynactin for retrograde transport along microtubules. Acts by binding both GTP-bound ARL8 and dynein-dynactin. In nonneuronal cells, promotes concentration of endolysosomes in the juxtanuclear area. In hippocampal neurons, drives retrograde transport of endolysosomes from the axon to the soma. Plays a role in the generation of neuronal polarity formation and axon growth. Implicated in the formation of a single axon by developing neurons. May inhibit the formation of additional axons by inhibition of PI3K in minor neuronal processes. Plays a role in the formation of F-actin-enriched protrusive structures at the cell periphery. Plays a role in cytoskeletal organization by regulating the subcellular localization of FSCN1 and DBN1 at axonal growth cones. The protein is Protein RUFY3 of Rattus norvegicus (Rat).